The primary structure comprises 341 residues: S-adenosylmethionine:tRNA ribosyltransferase-isomerase (341 aa).

The protein belongs to the QueA family. Monomer.

It is found in the cytoplasm. It catalyses the reaction 7-aminomethyl-7-carbaguanosine(34) in tRNA + S-adenosyl-L-methionine = epoxyqueuosine(34) in tRNA + adenine + L-methionine + 2 H(+). Its pathway is tRNA modification; tRNA-queuosine biosynthesis. Functionally, transfers and isomerizes the ribose moiety from AdoMet to the 7-aminomethyl group of 7-deazaguanine (preQ1-tRNA) to give epoxyqueuosine (oQ-tRNA). In Clostridium perfringens (strain SM101 / Type A), this protein is S-adenosylmethionine:tRNA ribosyltransferase-isomerase.